The chain runs to 104 residues: Signal recognition particle 19 kDa protein (104 aa).

The protein belongs to the SRP19 family. In terms of assembly, part of the signal recognition particle protein translocation system, which is composed of SRP and FtsY. Archaeal SRP consists of a 7S RNA molecule of 300 nucleotides and two protein subunits: SRP54 and SRP19.

It is found in the cytoplasm. Its function is as follows. Involved in targeting and insertion of nascent membrane proteins into the cytoplasmic membrane. Binds directly to 7S RNA and mediates binding of the 54 kDa subunit of the SRP. This is Signal recognition particle 19 kDa protein from Archaeoglobus fulgidus (strain ATCC 49558 / DSM 4304 / JCM 9628 / NBRC 100126 / VC-16).